Reading from the N-terminus, the 524-residue chain is Bifunctional methyltransferase (524 aa).

Residues 1–306 (MQCSIKQILS…GHSRVILFSP (306 aa)) form a hemK region. An RF MTase region spans residues 1-308 (MQCSIKQILS…SRVILFSPIN (308 aa)). Residues 146–150 (GTGSG), aspartate 169, tryptophan 198, asparagine 213, glutamate 353, glutamate 378, asparagine 405, and aspartate 427 contribute to the S-adenosyl-L-methionine site. 213 to 216 (NPPY) contributes to the substrate binding site. The tRNA (guanine-N(7)-)-methyltransferase stretch occupies residues 307 to 524 (INLNRSYARR…MILRHVLGDH (218 aa)). Positions 311 to 524 (RSYARRIGKS…MILRHVLGDH (214 aa)) are tRNA MTase. Residue aspartate 427 is part of the active site. Positions 431 and 463 each coordinate substrate.

The protein in the C-terminal section; belongs to the class I-like SAM-binding methyltransferase superfamily. TrmB family. This sequence in the N-terminal section; belongs to the protein N5-glutamine methyltransferase family. PrmC subfamily.

It catalyses the reaction L-glutaminyl-[peptide chain release factor] + S-adenosyl-L-methionine = N(5)-methyl-L-glutaminyl-[peptide chain release factor] + S-adenosyl-L-homocysteine + H(+). The catalysed reaction is guanosine(46) in tRNA + S-adenosyl-L-methionine = N(7)-methylguanosine(46) in tRNA + S-adenosyl-L-homocysteine. In terms of biological role, methylates the class 1 translation termination release factors RF1/PrfA and RF2/PrfB on the glutamine residue of the universally conserved GGQ motif. Its function is as follows. Catalyzes the formation of N(7)-methylguanine at position 46 (m7G46) in tRNA. The polypeptide is Bifunctional methyltransferase (prmC/trmB) (Rickettsia conorii (strain ATCC VR-613 / Malish 7)).